Consider the following 589-residue polypeptide: Putative adenine deaminase BC_3012 (589 aa).

The protein belongs to the metallo-dependent hydrolases superfamily. Adenine deaminase family.

The catalysed reaction is adenine + H2O + H(+) = hypoxanthine + NH4(+). In Bacillus cereus (strain ATCC 14579 / DSM 31 / CCUG 7414 / JCM 2152 / NBRC 15305 / NCIMB 9373 / NCTC 2599 / NRRL B-3711), this protein is Putative adenine deaminase BC_3012.